Reading from the N-terminus, the 238-residue chain is Purine nucleoside phosphorylase DeoD-type (238 aa).

Position 4 (histidine 4) interacts with a purine D-ribonucleoside. Residues glycine 20, arginine 24, arginine 43, and 87–90 contribute to the phosphate site; that span reads RIGS. A purine D-ribonucleoside contacts are provided by residues 181–183 and 205–206; these read EME and SD. The Proton donor role is filled by aspartate 206.

This sequence belongs to the PNP/UDP phosphorylase family. As to quaternary structure, homohexamer; trimer of homodimers.

The catalysed reaction is a purine D-ribonucleoside + phosphate = a purine nucleobase + alpha-D-ribose 1-phosphate. It catalyses the reaction a purine 2'-deoxy-D-ribonucleoside + phosphate = a purine nucleobase + 2-deoxy-alpha-D-ribose 1-phosphate. Functionally, catalyzes the reversible phosphorolytic breakdown of the N-glycosidic bond in the beta-(deoxy)ribonucleoside molecules, with the formation of the corresponding free purine bases and pentose-1-phosphate. This is Purine nucleoside phosphorylase DeoD-type from Mycoplasma genitalium (strain ATCC 33530 / DSM 19775 / NCTC 10195 / G37) (Mycoplasmoides genitalium).